The following is a 393-amino-acid chain: D-alanyl-D-alanine carboxypeptidase DacA (393 aa).

Positions 1-18 (MLKRTTKIAFLSSFVALS) are cleaved as a signal peptide. Serine 65 serves as the catalytic Acyl-ester intermediate. Catalysis depends on lysine 68, which acts as the Proton acceptor. Residue serine 128 is part of the active site. Lysine 231 contacts substrate.

This sequence belongs to the peptidase S11 family.

The protein resides in the cell inner membrane. The catalysed reaction is Preferential cleavage: (Ac)2-L-Lys-D-Ala-|-D-Ala. Also transpeptidation of peptidyl-alanyl moieties that are N-acyl substituents of D-alanine.. Its pathway is cell wall biogenesis; peptidoglycan biosynthesis. Removes C-terminal D-alanyl residues from sugar-peptide cell wall precursors. The polypeptide is D-alanyl-D-alanine carboxypeptidase DacA (dacA) (Haemophilus influenzae (strain ATCC 51907 / DSM 11121 / KW20 / Rd)).